The chain runs to 1387 residues: MQCYTELLPPSGVTHAISLPFLSATSNNLIVAKTSILQVFSLVNVAYGTSAPPNADDKGRVERQQYTKLILVAEYDLSGTITGLGRVKILDSRSGGEALLVSTRNAKLSLVEWDHERHGISTISIHYYEREDVHSSPWTPDLRLCPSLLAVDPSSRCAILNFGIHSVAILPFHQTGDDLVMDEFDEDLDEKPEGASNIPAQAAVANDTTMYKTPYASSFVLPLTALDPALVHPIHLAFLYEYREPTFGILYSHLTTSSALLHDRKDIVSYAVFTLDIQQRASTTLITVSRLPSDLWKVVPLPPPIGGALLIGSNELIHVDQAGKTNAVGINEFARQASAFSMVDQSDLGLRLEGCVVEQLGTDSGDILLVLADGKMAILRLKVDGRSVSGISAQLVSEKAGGSILKARPSCSASLGRGKVFFGSEETDSLLIGWSRPSQSMRKPKVESADDVFGDHSETEDDEDDIYEDDLYSTPVNQTTLSKTTSQTNGLNKDDFVFRSHDRLWNLGPMSDVTLGRPPGSHDKNRKQSSSRTSADLELVVTQGKGNAGGLAVLQRELDPYVIDSMKMDNVDGVWSIQVGAPDSTNTRTSSRNYDKYLVFSKSTEPGKEQSVVYSVGGSGIEEMKAPEFNPNEDSTVDIGTLAGGTRVVQVLKSEVRSYDTNLELAQIYPIWDEDTSDELSVVSASFAEPYVLIVRDDQSLLLLQADKSGDLDEVNIDGILSSHRWLSGCLYLDKYHTFVPTKGQDQPLSDNILLVLLRADHTLFIFSLPTLTEPLCSVDGVDLLPLILSCEPPPKRVTYRETLSEVLIADLGDSISRQPYMILRTANDDLILYQPYHPKTSLDKPELRFVKIIDHFLPRFDPSPKAYMPHSKFLRAYSDICGYKTVFMSGSNPCFVMKSSTSSPHVLRLRGEAVSSLSSFHIPACEKGFAYVDASNMVRMCRLPSNTRFDNSWVTRKVHVGDQIDCVEYFAHSEIYALGSSHKVDFKLPEDDEIHPEWRSEVISFMPQLERGCIKLLSPRTWSVVDSYELGDAERVMCMKTINMEISEITHEMKDMLVVGTATVRGEDITPRGSIYVFEIIEVAPDPDRPETNRKLKIFAKDDVKGAVTAVSGIGGQGFLIMAQGQKCMVRGLKEDGSLLPVAFMDMQCYVKVLKELQGTGLCIMGDALKGIWFAGYSEEPYRLTLFGKDNEYLQVIAADFLPDGKRLYILVADDDCTIHVLEYDPEDPTSSKGDRLLHRSSFHTGHFTSTMTLLPEHSSSPSADDPEEDDMDVDYVPKSYQVLVTSQEGSIGVVTPLTEDSYRRLSALQSQLVTSMEHPCGLNPKAYRAVESDGFGGRGIVDGNLLLRWLDMGVQRKAEIAGRVGADIESIRVDLETISGGLDFL.

Disordered regions lie at residues 440 to 493 (SMRK…GLNK) and 509 to 534 (PMSDVTLGRPPGSHDKNRKQSSSRTS). Positions 444-457 (PKVESADDVFGDHS) are enriched in basic and acidic residues. Positions 458 to 471 (ETEDDEDDIYEDDL) are enriched in acidic residues. The segment covering 474-491 (TPVNQTTLSKTTSQTNGL) has biased composition (polar residues).

Belongs to the CFT1 family.

The protein localises to the nucleus. Its function is as follows. RNA-binding component of the cleavage and polyadenylation factor (CPF) complex, which plays a key role in polyadenylation-dependent pre-mRNA 3'-end formation and cooperates with cleavage factors including the CFIA complex and NAB4/CFIB. Involved in poly(A) site recognition. May be involved in coupling transcription termination and mRNA 3'-end formation. In Coccidioides immitis (strain RS) (Valley fever fungus), this protein is Protein CFT1 (CFT1).